We begin with the raw amino-acid sequence, 379 residues long: Armadillo repeat-containing X-linked protein 3 (379 aa).

The Mitochondrial intermembrane segment spans residues 1–6 (MGYARK). 2 mitochondrion outer membrane (MOM)-targeting sequence regions span residues 1–6 (MGYARK) and 26–37 (RLTRGRKQNKEK). A helical; Signal-anchor membrane pass occupies residues 7 to 29 (VGWVTAGLVIGAGACYCIYRLTR). Topologically, residues 30–379 (GRKQNKEKMA…AEHMFPKSQE (350 aa)) are cytoplasmic. A phosphoserine mark is found at serine 61, serine 67, and serine 72. Residues 89–98 (RARARARARA) are nuclear localization signal. Residues 95-106 (RARATRARRAVQ) show a composition bias toward basic residues. Residues 95-116 (RARATRARRAVQKRASPNSDDT) are disordered. Serine 110 carries the phosphoserine modification. ARM repeat units lie at residues 111 to 151 (PNSD…NNAA), 153 to 192 (AFNRDIIRDLGGLPIVAKILNTRDPIVKEKALIVLNNLSV), and 233 to 272 (VTNEYQHMLANSISDFFRLFSAGNEETKLQVLKLLLNLAE).

Belongs to the eutherian X-chromosome-specific Armcx family. In terms of assembly, interacts (via ARM domain) with MIRO1, MIRO2 and TRAK2. The interaction with Miro is calcium-dependent. Interacts with SOX10.

It localises to the mitochondrion outer membrane. The protein localises to the cytoplasm. It is found in the nucleus. Functionally, regulates mitochondrial aggregation and transport in axons in living neurons. May link mitochondria to the TRAK2-kinesin motor complex via its interaction with Miro and TRAK2. Mitochondrial distribution and dynamics is regulated through ARMCX3 protein degradation, which is promoted by PCK and negatively regulated by WNT1. Enhances the SOX10-mediated transactivation of the neuronal acetylcholine receptor subunit alpha-3 and beta-4 subunit gene promoters. The chain is Armadillo repeat-containing X-linked protein 3 (ARMCX3) from Homo sapiens (Human).